Here is a 926-residue protein sequence, read N- to C-terminus: MATAANTATAAGAAKDAPPAPTKSLSGIVKQVLSGDTVVIRATKGAPPPEKQITFSHVLAPKLARRPGAGGDETKDEPWAWESREFLRKKLIGVEVTFTFDKPANSNREYGFVWIGKDKETGENVVESIVREGLVSVRREGRPTAEQQTLIELEDQARAAGRGKWSPTASAADKVRNIKWSHENPAHLVDIYGGNPVKAIIEHVRDGSTVRAFLLPDFHYITLMISGIRCPGVKLDADGKPDLSVKVPFADEARYYVETRLLQRDVEIRLESVNNSNFIGTILYPKGNIAESLLREGLAKCVDWSMAVMKTGTDKLRAAERFAKEKRLRQWQDYQAKTPAFNSKEKDFSGTVVEVFNGDAINVRLSNGQVKKVFFSSIRPPRDQRAVVGTDGEEIVKAPPRGKNYRPLYEIPHMFDAREFLRKKLINKKVQCNLDYISPPRENFPEKYCYTVSIGGQNVAEAMVAKGLATCVRYRQDDDQRSSAYDQLIAAEQQAIKGLKGLHAKKDNATLRVNDLTVDHSRIKVQYLPSWQRALRTEAIVEFVASGSRLRIFVPKDSCLVTFLLAGISCPRSSRPALNGVPAQEGEPFGDEALTFTRERVLQRDVSVHIDTTDKAGSSVIGWLWTDSGANLSVALVEEGLAEVHFSAEKSEYYRQLKIAEDRAKAAKKNIWTNYVEEVPKEKTVTEEEKEDKVVAERKVNYENVIVTEITETLTFFAQSVESGSKLESLMSKLHADFQSNPPIAGSYTPKRGDLVAAQFTLDNQWYRAKVERVQGSNATVLYIDYGNKETLPTNRLAALPPAFSSEKPYATEYALALVALPTDNEDKEEALRAFSEDVLNHKVQLNVELKVTGSPNLATLRDPTTKVDFGKQLVAEGLVLAEQRGERKLKELVDQYKAAQEAARVAHLAIWKYGDITQDDAPEFR.

Low complexity predominate over residues 1–17 (MATAANTATAAGAAKDA). Residues 1–24 (MATAANTATAAGAAKDAPPAPTKS) are disordered. 4 consecutive TNase-like domains span residues 23-167 (KSLS…KWSP), 195-333 (NPVK…QWQD), 346-505 (KDFS…LHAK), and 535-674 (LRTE…IWTN). The region spanning 749 to 807 (TPKRGDLVAAQFTLDNQWYRAKVERVQGSNATVLYIDYGNKETLPTNRLAALPPAFSSE) is the Tudor domain. The interval 760–788 (FTLDNQWYRAKVERVQGSNATVLYIDYGN) is involved in dimethylarginine binding.

In terms of assembly, associates with the RNA-induced silencing complex (RISC). Interacts with the RISC components AGO2, Fmr1 and vig. Interacts with piwi. As to expression, expressed in adult ovaries and testis (at protein level).

The protein localises to the cytoplasm. The protein resides in the nucleus. The catalysed reaction is Endonucleolytic cleavage to nucleoside 3'-phosphates and 3'-phosphooligonucleotide end-products.. Functionally, endonuclease which shows activity towards both DNA and RNA substrates. Has a role in translation regulation throught its association with the with the RNA-induced silencing complex (RISC). Plays a role in spermatogenesis probably by negatively regulating piwi expression in the germline. Together with piwi, might be involved in transposon repression in the germline. The polypeptide is Staphylococcal nuclease domain-containing protein 1 (Drosophila melanogaster (Fruit fly)).